We begin with the raw amino-acid sequence, 194 residues long: Ubiquitin-conjugating enzyme E2 T (194 aa).

Residues Gln2 to Ile152 enclose the UBC core domain. Catalysis depends on Cys86, which acts as the Glycyl thioester intermediate. 2 stretches are compositionally biased toward basic and acidic residues: residues Cys158–Asn170 and Asn185–Leu194. The disordered stretch occupies residues Cys158–Leu194.

The protein belongs to the ubiquitin-conjugating enzyme family.

The protein resides in the nucleus. The enzyme catalyses S-ubiquitinyl-[E1 ubiquitin-activating enzyme]-L-cysteine + [E2 ubiquitin-conjugating enzyme]-L-cysteine = [E1 ubiquitin-activating enzyme]-L-cysteine + S-ubiquitinyl-[E2 ubiquitin-conjugating enzyme]-L-cysteine.. It functions in the pathway protein modification; protein ubiquitination. Its function is as follows. Accepts ubiquitin from the E1 complex and catalyzes its covalent attachment to other proteins. Catalyzes monoubiquitination. Involved in DNA repair. In Danio rerio (Zebrafish), this protein is Ubiquitin-conjugating enzyme E2 T (ube2t).